Here is a 446-residue protein sequence, read N- to C-terminus: Histidine--tRNA ligase (446 aa).

Belongs to the class-II aminoacyl-tRNA synthetase family. In terms of assembly, homodimer.

The protein localises to the cytoplasm. It catalyses the reaction tRNA(His) + L-histidine + ATP = L-histidyl-tRNA(His) + AMP + diphosphate + H(+). In Paraburkholderia phytofirmans (strain DSM 17436 / LMG 22146 / PsJN) (Burkholderia phytofirmans), this protein is Histidine--tRNA ligase.